A 311-amino-acid polypeptide reads, in one-letter code: tRNA-cytidine(32) 2-sulfurtransferase (311 aa).

Residues 47-52 (SGGKDS) carry the PP-loop motif motif. The [4Fe-4S] cluster site is built by Cys122, Cys125, and Cys213.

Belongs to the TtcA family. Homodimer. Requires Mg(2+) as cofactor. [4Fe-4S] cluster serves as cofactor.

It is found in the cytoplasm. It catalyses the reaction cytidine(32) in tRNA + S-sulfanyl-L-cysteinyl-[cysteine desulfurase] + AH2 + ATP = 2-thiocytidine(32) in tRNA + L-cysteinyl-[cysteine desulfurase] + A + AMP + diphosphate + H(+). It participates in tRNA modification. Its function is as follows. Catalyzes the ATP-dependent 2-thiolation of cytidine in position 32 of tRNA, to form 2-thiocytidine (s(2)C32). The sulfur atoms are provided by the cysteine/cysteine desulfurase (IscS) system. The protein is tRNA-cytidine(32) 2-sulfurtransferase of Escherichia coli O139:H28 (strain E24377A / ETEC).